Reading from the N-terminus, the 258-residue chain is Caffeoyl-CoA O-methyltransferase 1 (258 aa).

The span at 1–16 (MATTATEAAPAQEQQA) shows a compositional bias: low complexity. Residues 1–31 (MATTATEAAPAQEQQANGNGEQKTRHSEVGH) form a disordered region. Basic and acidic residues predominate over residues 22-31 (QKTRHSEVGH). Lysine 32 provides a ligand contact to substrate. Residues threonine 74, glutamate 96, 98-99 (GV), serine 104, aspartate 122, and alanine 151 each bind S-adenosyl-L-methionine. Aspartate 174 is a substrate binding site. Aspartate 174 is a binding site for a divalent metal cation. Position 176 (aspartate 176) interacts with S-adenosyl-L-methionine. Residues aspartate 200 and asparagine 201 each contribute to the a divalent metal cation site. Asparagine 205 contributes to the substrate binding site.

The protein belongs to the class I-like SAM-binding methyltransferase superfamily. Cation-dependent O-methyltransferase family. CCoAMT subfamily. Requires a divalent metal cation as cofactor.

It carries out the reaction (E)-caffeoyl-CoA + S-adenosyl-L-methionine = (E)-feruloyl-CoA + S-adenosyl-L-homocysteine + H(+). The protein operates within aromatic compound metabolism; phenylpropanoid biosynthesis. Its function is as follows. Methylates caffeoyl-CoA to feruloyl-CoA and 5-hydroxyferuloyl-CoA to sinapoyl-CoA. Plays a role in the synthesis of feruloylated polysaccharides. Involved in the reinforcement of the plant cell wall. Also involved in the responding to wounding or pathogen challenge by the increased formation of cell wall-bound ferulic acid polymers. This is Caffeoyl-CoA O-methyltransferase 1 (CCOAOMT1) from Zea mays (Maize).